A 441-amino-acid chain; its full sequence is Ribosomal protein uS12 methylthiotransferase RimO (441 aa).

The MTTase N-terminal domain occupies 8-118 (PKIGFVSLGC…VLEHVHHYVP (111 aa)). Cysteine 17, cysteine 53, cysteine 82, cysteine 150, cysteine 154, and cysteine 157 together coordinate [4Fe-4S] cluster. The 238-residue stretch at 136-373 (LTPRHYAYLK…MQLQQQISAE (238 aa)) folds into the Radical SAM core domain. The TRAM domain maps to 376–441 (QEKVGREILV…DEYDLWGSRV (66 aa)).

Belongs to the methylthiotransferase family. RimO subfamily. It depends on [4Fe-4S] cluster as a cofactor.

It localises to the cytoplasm. It catalyses the reaction L-aspartate(89)-[ribosomal protein uS12]-hydrogen + (sulfur carrier)-SH + AH2 + 2 S-adenosyl-L-methionine = 3-methylsulfanyl-L-aspartate(89)-[ribosomal protein uS12]-hydrogen + (sulfur carrier)-H + 5'-deoxyadenosine + L-methionine + A + S-adenosyl-L-homocysteine + 2 H(+). Catalyzes the methylthiolation of an aspartic acid residue of ribosomal protein uS12. This is Ribosomal protein uS12 methylthiotransferase RimO from Shigella flexneri.